The chain runs to 316 residues: Cell division protein ZipA (316 aa).

At Met1–Arg5 the chain is on the periplasmic side. Residues Phe6–Ser26 form a helical membrane-spanning segment. At Ser27 to Ala316 the chain is on the cytoplasmic side. The disordered stretch occupies residues Gly36–Asp65. The segment covering Gly41–Arg57 has biased composition (basic and acidic residues).

It belongs to the ZipA family. As to quaternary structure, interacts with FtsZ via their C-terminal domains.

Its subcellular location is the cell inner membrane. Its function is as follows. Essential cell division protein that stabilizes the FtsZ protofilaments by cross-linking them and that serves as a cytoplasmic membrane anchor for the Z ring. Also required for the recruitment to the septal ring of downstream cell division proteins. The polypeptide is Cell division protein ZipA (Vibrio parahaemolyticus serotype O3:K6 (strain RIMD 2210633)).